The sequence spans 447 residues: N-succinylarginine dihydrolase (447 aa).

Substrate contacts are provided by residues 19–28 (AGLSFGNEAS), N110, and 137–138 (HR). The active site involves E174. R212 provides a ligand contact to substrate. The active site involves H248. D250 and N359 together coordinate substrate. The active-site Nucleophile is C365.

Belongs to the succinylarginine dihydrolase family. In terms of assembly, homodimer.

The catalysed reaction is N(2)-succinyl-L-arginine + 2 H2O + 2 H(+) = N(2)-succinyl-L-ornithine + 2 NH4(+) + CO2. The protein operates within amino-acid degradation; L-arginine degradation via AST pathway; L-glutamate and succinate from L-arginine: step 2/5. Its function is as follows. Catalyzes the hydrolysis of N(2)-succinylarginine into N(2)-succinylornithine, ammonia and CO(2). The chain is N-succinylarginine dihydrolase from Escherichia coli (strain ATCC 8739 / DSM 1576 / NBRC 3972 / NCIMB 8545 / WDCM 00012 / Crooks).